We begin with the raw amino-acid sequence, 170 residues long: Adenine phosphoribosyltransferase (170 aa).

It belongs to the purine/pyrimidine phosphoribosyltransferase family. In terms of assembly, homodimer.

Its subcellular location is the cytoplasm. It carries out the reaction AMP + diphosphate = 5-phospho-alpha-D-ribose 1-diphosphate + adenine. Its pathway is purine metabolism; AMP biosynthesis via salvage pathway; AMP from adenine: step 1/1. Functionally, catalyzes a salvage reaction resulting in the formation of AMP, that is energically less costly than de novo synthesis. The protein is Adenine phosphoribosyltransferase of Cenarchaeum symbiosum (strain A).